Consider the following 333-residue polypeptide: Global transcription regulator sge1 (333 aa).

Disordered regions lie at residues 93 to 139 (PPGE…PSVP) and 241 to 307 (QHQS…PQYQ).

It belongs to the MIT1/WOR1 family.

The protein resides in the nucleus. In terms of biological role, global transcriptional regulator that acts as an activator of secondary metabolism. Required for expression of a yet uncharacterized secondary metabolism gene cluster containing a non-canonical non-ribosomal peptide synthetase. Not required for conidiogenesis nor for pathogenicity, but is involved in vegetative growth. This chain is Global transcription regulator sge1, found in Gibberella fujikuroi (strain CBS 195.34 / IMI 58289 / NRRL A-6831) (Bakanae and foot rot disease fungus).